The following is a 126-amino-acid chain: Small ribosomal subunit protein uS13 (126 aa).

The interval 95–126 (GLPVRGQRTRTNARTRKGPRKTVAGKKKAPRK) is disordered.

This sequence belongs to the universal ribosomal protein uS13 family. As to quaternary structure, part of the 30S ribosomal subunit. Forms a loose heterodimer with protein S19. Forms two bridges to the 50S subunit in the 70S ribosome.

Located at the top of the head of the 30S subunit, it contacts several helices of the 16S rRNA. In the 70S ribosome it contacts the 23S rRNA (bridge B1a) and protein L5 of the 50S subunit (bridge B1b), connecting the 2 subunits; these bridges are implicated in subunit movement. Contacts the tRNAs in the A and P-sites. The chain is Small ribosomal subunit protein uS13 (rpsM) from Thermus thermophilus (strain ATCC BAA-163 / DSM 7039 / HB27).